We begin with the raw amino-acid sequence, 188 residues long: UPF0398 protein OEOE_1093 (188 aa).

Belongs to the UPF0398 family.

The sequence is that of UPF0398 protein OEOE_1093 from Oenococcus oeni (strain ATCC BAA-331 / PSU-1).